The sequence spans 345 residues: MTNMMKALVKTKPEVGLWMERVPVPEVGPNDVLIRVKKSAICGTDVHIWNWDQWAQKTIPVPMVVGHEFMGEIAEVGSAVTKHHVGERVSGEGHIVCGKCRNCRAGRGHLCRNTLGVGVNRPGSFAEFVCLPEYNVVTIPDDVPDEIAAIFDPFGNAVHTALSFDLVGEDVLVTGAGPIGIMGALVAKRSGARKVVITDINPVRLDLARKLGIDHVVDASKENLADVMRSIGMTEGFDVGLEMSGAAPAFRDMIDKMNNGGKIAILGIAPAGFEIDWNKVIFKMLNLKGIYGREMFETWYKMIAFVQGGLDLAPVITHRIGIDAFRDGFEAMRSGNSGKVVMDWI.

C42 lines the Zn(2+) pocket. Catalysis depends on charge relay system residues T44 and H47. Residues H67, E68, C97, C100, C103, and C111 each coordinate Zn(2+). NAD(+)-binding positions include I179, D199, R204, L266–I268, and I290–Y291.

The protein belongs to the zinc-containing alcohol dehydrogenase family. As to quaternary structure, homotetramer. Zn(2+) serves as cofactor.

It localises to the cytoplasm. The catalysed reaction is L-threonine + NAD(+) = (2S)-2-amino-3-oxobutanoate + NADH + H(+). Its pathway is amino-acid degradation; L-threonine degradation via oxydo-reductase pathway; glycine from L-threonine: step 1/2. Catalyzes the NAD(+)-dependent oxidation of L-threonine to 2-amino-3-ketobutyrate. The polypeptide is L-threonine 3-dehydrogenase (Sinorhizobium fredii (strain NBRC 101917 / NGR234)).